We begin with the raw amino-acid sequence, 382 residues long: LIM homeobox transcription factor 1-alpha (382 aa).

2 consecutive LIM zinc-binding domains span residues 33-92 (SVCE…LFAV) and 92-154 (VKCG…EREL). 2 disordered regions span residues 161–208 (AASD…QQRR) and 252–285 (KLAR…GMEG). Residues 195-254 (PKRPRTILTTQQRRAFKASFEVSSKPCRKVRETLAAETGLSVRVVQVWFQNQRAKMKKLA) constitute a DNA-binding region (homeobox). Over residues 256 to 269 (RQQQQQQDQQNTQR) the composition is skewed to low complexity.

In terms of tissue distribution, isoform 1 is expressed in many tissues. Not found in heart, liver, spleen and testis. Relatively highly expressed in fetal brain. Isoform LMX1A-4AB is expressed in testis.

The protein localises to the nucleus. Its function is as follows. Acts as a transcriptional activator by binding to an A/T-rich sequence, the FLAT element, in the insulin gene promoter. Required for development of the roof plate and, in turn, for specification of dorsal cell fates in the CNS and developing vertebrae. The protein is LIM homeobox transcription factor 1-alpha (LMX1A) of Homo sapiens (Human).